The following is a 702-amino-acid chain: Acetylcholinesterase (702 aa).

Positions 1-36 (MEIRGLITRLLGPCHLRHLILCSLGLYSILVQSVHC) are cleaved as a signal peptide. Residues 107-134 (HIHSTTTRRRGLTRRESSSDATDSDPLV) are disordered. Asn187 is a glycosylation site (N-linked (GlcNAc...) asparagine). The cysteines at positions 195 and 222 are disulfide-linked. Ser327 (acyl-ester intermediate) is an active-site residue. A disulfide bond links Cys381 and Cys394. Active-site charge relay system residues include Glu453 and His567. Cys529 and Cys650 form a disulfide bridge. N-linked (GlcNAc...) asparagine glycosylation is present at Asn637.

It belongs to the type-B carboxylesterase/lipase family.

It is found in the synapse. It localises to the secreted. Its subcellular location is the cell membrane. The enzyme catalyses acetylcholine + H2O = choline + acetate + H(+). Functionally, rapidly hydrolyzes choline released into the synapse. In Culex pipiens (House mosquito), this protein is Acetylcholinesterase (ACHE1).